The primary structure comprises 64 residues: Conotoxin Im11.4 (64 aa).

Positions 1-26 (MMFRLTSVSCILLVIAFLNLVGLTNA) are cleaved as a signal peptide. Disulfide bonds link Cys-27-Cys-41, Cys-34-Cys-46, Cys-40-Cys-50, and Cys-45-Cys-54. His-57 is modified (histidine amide). A propeptide spanning residues 61 to 64 (ATFQ) is cleaved from the precursor.

It belongs to the conotoxin I2 superfamily. As to expression, expressed by the venom duct.

It is found in the secreted. This is Conotoxin Im11.4 from Conus imperialis (Imperial cone).